Consider the following 118-residue polypeptide: Large ribosomal subunit protein bL19 (118 aa).

It belongs to the bacterial ribosomal protein bL19 family.

In terms of biological role, this protein is located at the 30S-50S ribosomal subunit interface and may play a role in the structure and function of the aminoacyl-tRNA binding site. The protein is Large ribosomal subunit protein bL19 of Marinobacter nauticus (strain ATCC 700491 / DSM 11845 / VT8) (Marinobacter aquaeolei).